The sequence spans 593 residues: FAD-binding monooxygenase acrE (593 aa).

FAD is bound by residues 61–64 (TWRF), 73–74 (DS), and Y79. 71–73 (RVD) is an NADP(+) binding site. Residues 200–206 (TGASGVQ) and 223–224 (RS) each bind NADP(+).

This sequence belongs to the FAD-binding monooxygenase family. FAD serves as cofactor.

It participates in secondary metabolite biosynthesis. Its function is as follows. FAD-binding monooxygenase; part of the cluster that mediates the biosynthesis of acurin A, a highly reduced polyketide coupled to a serine via a peptide bond. The activities of the highly reducing polyketide synthase acrA and the nonribosomal peptide synthetase acrB are collectively responsible for the synthesis of the acurin A core structure with a heptaketide backbone produced by acrA covalently fused to a L-serine by acrB. After the formation of the PK-NRP hybrid product, it is detached from acrB by reductive release to set up the formation of the lactam ring by aldol condensation. The hydrolyase acrC then catalyzes water loss to generate a double bond in the ring. This double bond is probably reduced, which is followed by three oxidations at C-22 to generate the carboxylic acid moiety, involving probably the FAD-binding monooxygenase acrE and the cytochrome P450 monooxygenases acrD and acrF. Finally, a last methylation step performed by the O-methyltransferase acrG leads to the production of acurin A. This is FAD-binding monooxygenase acrE from Aspergillus aculeatus (strain ATCC 16872 / CBS 172.66 / WB 5094).